The chain runs to 447 residues: UPF0328 protein ECU10_1870 (447 aa).

Composition is skewed to basic and acidic residues over residues 1–10 (MPSDHPDFRS) and 64–84 (HTEGCHTHEANPEPNTKHTET). 2 disordered regions span residues 1-103 (MPSD…TATP) and 147-173 (VKSQSVSHRAPITYQPPRPTTTSNPRI). Residues 92–103 (CPPPHPGPTATP) are compositionally biased toward pro residues.

This sequence belongs to the UPF0328 family.

The sequence is that of UPF0328 protein ECU10_1870 from Encephalitozoon cuniculi (strain GB-M1) (Microsporidian parasite).